The sequence spans 277 residues: Ribosomal RNA small subunit methyltransferase A (277 aa).

Residues N18, L20, G45, E66, D89, and N110 each contribute to the S-adenosyl-L-methionine site.

This sequence belongs to the class I-like SAM-binding methyltransferase superfamily. rRNA adenine N(6)-methyltransferase family. RsmA subfamily.

The protein resides in the cytoplasm. The catalysed reaction is adenosine(1518)/adenosine(1519) in 16S rRNA + 4 S-adenosyl-L-methionine = N(6)-dimethyladenosine(1518)/N(6)-dimethyladenosine(1519) in 16S rRNA + 4 S-adenosyl-L-homocysteine + 4 H(+). In terms of biological role, specifically dimethylates two adjacent adenosines (A1518 and A1519) in the loop of a conserved hairpin near the 3'-end of 16S rRNA in the 30S particle. May play a critical role in biogenesis of 30S subunits. This Cupriavidus taiwanensis (strain DSM 17343 / BCRC 17206 / CCUG 44338 / CIP 107171 / LMG 19424 / R1) (Ralstonia taiwanensis (strain LMG 19424)) protein is Ribosomal RNA small subunit methyltransferase A.